The sequence spans 185 residues: MSVALSIPLLSLPEDMREALAAAAGPVYSGDRFRRQLLQTPCSGVACIGDYVSQACIATLSTAWTGPLILVVDGKTRRESWRDMVVPQGFRVHRVRSPPGSLSLEAYTTICKLMEEYGRHVVFVEGEEDLIALAALDCGIDWTVVYGLPGVGGVVVHRCLRKPGLENSSVLAFKPGTGVHHQSSP.

Residues aspartate 50, valine 52, aspartate 73, lysine 75, and glutamate 128 each contribute to the GTP site.

This sequence belongs to the GTP-dependent DPCK family.

The enzyme catalyses 3'-dephospho-CoA + GTP = GDP + CoA + H(+). The protein operates within cofactor biosynthesis; coenzyme A biosynthesis. Catalyzes the GTP-dependent phosphorylation of the 3'-hydroxyl group of dephosphocoenzyme A to form coenzyme A (CoA). The protein is GTP-dependent dephospho-CoA kinase of Aeropyrum pernix (strain ATCC 700893 / DSM 11879 / JCM 9820 / NBRC 100138 / K1).